Reading from the N-terminus, the 407-residue chain is CCA-adding enzyme (407 aa).

Residues Gly-32 and Arg-35 each coordinate ATP. CTP-binding residues include Gly-32 and Arg-35. Mg(2+) is bound by residues Asp-45 and Asp-47. ATP is bound by residues Arg-116, Asp-159, Arg-162, Arg-165, and Arg-168. Positions 116, 159, 162, 165, and 168 each coordinate CTP.

This sequence belongs to the tRNA nucleotidyltransferase/poly(A) polymerase family. Bacterial CCA-adding enzyme type 3 subfamily. As to quaternary structure, homodimer. The cofactor is Mg(2+).

The enzyme catalyses a tRNA precursor + 2 CTP + ATP = a tRNA with a 3' CCA end + 3 diphosphate. It catalyses the reaction a tRNA with a 3' CCA end + 2 CTP + ATP = a tRNA with a 3' CCACCA end + 3 diphosphate. Functionally, catalyzes the addition and repair of the essential 3'-terminal CCA sequence in tRNAs without using a nucleic acid template. Adds these three nucleotides in the order of C, C, and A to the tRNA nucleotide-73, using CTP and ATP as substrates and producing inorganic pyrophosphate. tRNA 3'-terminal CCA addition is required both for tRNA processing and repair. Also involved in tRNA surveillance by mediating tandem CCA addition to generate a CCACCA at the 3' terminus of unstable tRNAs. While stable tRNAs receive only 3'-terminal CCA, unstable tRNAs are marked with CCACCA and rapidly degraded. The polypeptide is CCA-adding enzyme (Lactiplantibacillus plantarum (strain ATCC BAA-793 / NCIMB 8826 / WCFS1) (Lactobacillus plantarum)).